A 314-amino-acid polypeptide reads, in one-letter code: 2,3-dihydroxyphenylpropionate/2,3-dihydroxicinnamic acid 1,2-dioxygenase (314 aa).

His115 functions as the Proton donor in the catalytic mechanism. His179 serves as the catalytic Proton acceptor.

This sequence belongs to the LigB/MhpB extradiol dioxygenase family. Homotetramer. The cofactor is Fe(2+).

The enzyme catalyses 3-(2,3-dihydroxyphenyl)propanoate + O2 = (2Z,4E)-2-hydroxy-6-oxonona-2,4-dienedioate + H(+). The catalysed reaction is (2E)-3-(2,3-dihydroxyphenyl)prop-2-enoate + O2 = (2Z,4E,7E)-2-hydroxy-6-oxonona-2,4,7-trienedioate + H(+). The protein operates within aromatic compound metabolism; 3-phenylpropanoate degradation. Functionally, catalyzes the non-heme iron(II)-dependent oxidative cleavage of 2,3-dihydroxyphenylpropionic acid and 2,3-dihydroxicinnamic acid into 2-hydroxy-6-ketononadienedioate and 2-hydroxy-6-ketononatrienedioate, respectively. The protein is 2,3-dihydroxyphenylpropionate/2,3-dihydroxicinnamic acid 1,2-dioxygenase of Escherichia coli O157:H7.